The chain runs to 175 residues: Bacterial proteasome activator (175 aa).

A disordered region spans residues 152-175 (LPPGIQVPGAQRGGATHPGTGQYL). The HbYX motif motif lies at 173-175 (QYL).

This sequence belongs to the Bpa family. As to quaternary structure, forms a homooligomeric, either hexameric or heptameric, ring-like structure which stacks co-axially with the proteasomal alpha-rings.

In terms of biological role, interacts with the core proteasome alpha-subunit (PrcA) through its C-terminal hydrophobic-tyrosine-X motif (HbYX motif). Interaction of Bpa with the proteasome stimulates proteasomal peptidase and casein degradation activity, which suggests Bpa could play a role in the removal of non-native or damaged proteins by influencing the conformation of the proteasome complex upon interaction. The sequence is that of Bacterial proteasome activator from Mycolicibacterium smegmatis (strain ATCC 700084 / mc(2)155) (Mycobacterium smegmatis).